The following is a 219-amino-acid chain: Probable nicotinate-nucleotide adenylyltransferase (219 aa).

This sequence belongs to the NadD family.

The catalysed reaction is nicotinate beta-D-ribonucleotide + ATP + H(+) = deamido-NAD(+) + diphosphate. It participates in cofactor biosynthesis; NAD(+) biosynthesis; deamido-NAD(+) from nicotinate D-ribonucleotide: step 1/1. Functionally, catalyzes the reversible adenylation of nicotinate mononucleotide (NaMN) to nicotinic acid adenine dinucleotide (NaAD). The polypeptide is Probable nicotinate-nucleotide adenylyltransferase (Pseudomonas entomophila (strain L48)).